A 463-amino-acid polypeptide reads, in one-letter code: UDP-N-acetylmuramoylalanine--D-glutamate ligase (463 aa).

Residue 109–115 (GTDGKST) coordinates ATP.

Belongs to the MurCDEF family.

It is found in the cytoplasm. It catalyses the reaction UDP-N-acetyl-alpha-D-muramoyl-L-alanine + D-glutamate + ATP = UDP-N-acetyl-alpha-D-muramoyl-L-alanyl-D-glutamate + ADP + phosphate + H(+). It participates in cell wall biogenesis; peptidoglycan biosynthesis. Cell wall formation. Catalyzes the addition of glutamate to the nucleotide precursor UDP-N-acetylmuramoyl-L-alanine (UMA). In Leptospira interrogans serogroup Icterohaemorrhagiae serovar copenhageni (strain Fiocruz L1-130), this protein is UDP-N-acetylmuramoylalanine--D-glutamate ligase.